The sequence spans 626 residues: tRNA uridine 5-carboxymethylaminomethyl modification enzyme MnmG (626 aa).

13-18 lines the FAD pocket; the sequence is GGGHAG. Residue 273 to 287 participates in NAD(+) binding; the sequence is GPRYCPSIEDKIHRF.

It belongs to the MnmG family. As to quaternary structure, homodimer. Heterotetramer of two MnmE and two MnmG subunits. FAD serves as cofactor.

It is found in the cytoplasm. Functionally, NAD-binding protein involved in the addition of a carboxymethylaminomethyl (cmnm) group at the wobble position (U34) of certain tRNAs, forming tRNA-cmnm(5)s(2)U34. The chain is tRNA uridine 5-carboxymethylaminomethyl modification enzyme MnmG from Acinetobacter baumannii (strain AB307-0294).